The primary structure comprises 276 residues: Large ribosomal subunit protein uL2 (276 aa).

Disordered regions lie at residues 33 to 55 (LVEA…RHIG) and 221 to 276 (RGTA…AKKK).

Belongs to the universal ribosomal protein uL2 family. As to quaternary structure, part of the 50S ribosomal subunit. Forms a bridge to the 30S subunit in the 70S ribosome.

In terms of biological role, one of the primary rRNA binding proteins. Required for association of the 30S and 50S subunits to form the 70S ribosome, for tRNA binding and peptide bond formation. It has been suggested to have peptidyltransferase activity; this is somewhat controversial. Makes several contacts with the 16S rRNA in the 70S ribosome. The sequence is that of Large ribosomal subunit protein uL2 from Psychrobacter sp. (strain PRwf-1).